A 400-amino-acid polypeptide reads, in one-letter code: Enoyl-[acyl-carrier-protein] reductase [NADH] 2 (400 aa).

Residues 48 to 53 (GASSGF), 75 to 76 (FE), 112 to 113 (DA), and 141 to 142 (LA) each bind NAD(+). Substrate is bound at residue Tyr-227. Tyr-237 acts as the Proton donor in catalysis. Residues Lys-246 and 275–277 (LVT) contribute to the NAD(+) site.

Belongs to the TER reductase family. In terms of assembly, monomer.

It catalyses the reaction a 2,3-saturated acyl-[ACP] + NAD(+) = a (2E)-enoyl-[ACP] + NADH + H(+). It functions in the pathway lipid metabolism; fatty acid biosynthesis. Its function is as follows. Involved in the final reduction of the elongation cycle of fatty acid synthesis (FAS II). Catalyzes the reduction of a carbon-carbon double bond in an enoyl moiety that is covalently linked to an acyl carrier protein (ACP). The protein is Enoyl-[acyl-carrier-protein] reductase [NADH] 2 of Photobacterium profundum (strain SS9).